A 314-amino-acid polypeptide reads, in one-letter code: Coiled-coil domain-containing protein 42 like-2 (314 aa).

Coiled coils occupy residues 34–139 and 175–233; these read RLLE…RQEK and NKLL…WESR.

It belongs to the CFAP73 family.

The protein is Coiled-coil domain-containing protein 42 like-2 of Xenopus laevis (African clawed frog).